The chain runs to 178 residues: Large ribosomal subunit protein uL6 (178 aa).

It belongs to the universal ribosomal protein uL6 family. As to quaternary structure, part of the 50S ribosomal subunit.

In terms of biological role, this protein binds to the 23S rRNA, and is important in its secondary structure. It is located near the subunit interface in the base of the L7/L12 stalk, and near the tRNA binding site of the peptidyltransferase center. This chain is Large ribosomal subunit protein uL6, found in Helicobacter acinonychis (strain Sheeba).